A 547-amino-acid chain; its full sequence is Glucose-6-phosphate isomerase (547 aa).

Residue E353 is the Proton donor of the active site. Residues H384 and K512 contribute to the active site.

This sequence belongs to the GPI family.

It is found in the cytoplasm. The enzyme catalyses alpha-D-glucose 6-phosphate = beta-D-fructose 6-phosphate. The protein operates within carbohydrate biosynthesis; gluconeogenesis. It functions in the pathway carbohydrate degradation; glycolysis; D-glyceraldehyde 3-phosphate and glycerone phosphate from D-glucose: step 2/4. Catalyzes the reversible isomerization of glucose-6-phosphate to fructose-6-phosphate. The protein is Glucose-6-phosphate isomerase of Glaesserella parasuis serovar 5 (strain SH0165) (Haemophilus parasuis).